The following is a 348-amino-acid chain: tRNA pseudouridine synthase D (348 aa).

Aspartate 81 acts as the Nucleophile in catalysis. The TRUD domain maps to 158 to 304 (GVPNYFGAQR…MRHERRSIEL (147 aa)).

This sequence belongs to the pseudouridine synthase TruD family.

The enzyme catalyses uridine(13) in tRNA = pseudouridine(13) in tRNA. Responsible for synthesis of pseudouridine from uracil-13 in transfer RNAs. In Aliivibrio salmonicida (strain LFI1238) (Vibrio salmonicida (strain LFI1238)), this protein is tRNA pseudouridine synthase D.